Consider the following 301-residue polypeptide: Ubiquinone biosynthesis protein COQ4, mitochondrial (301 aa).

A mitochondrion-targeting transit peptide spans methionine 1–tyrosine 46. The tract at residues glutamine 14–leucine 48 is disordered. The segment covering proline 38 to leucine 48 has biased composition (polar residues). Positions 185, 186, 189, and 201 each coordinate Zn(2+).

It belongs to the COQ4 family. In terms of assembly, component of a multi-subunit COQ enzyme complex, composed of at least COQ3, COQ4, COQ5, COQ6, COQ7 and COQ9. Zn(2+) is required as a cofactor.

The protein resides in the mitochondrion inner membrane. It catalyses the reaction a 4-hydroxy-3-methoxy-5-(all-trans-polyprenyl)benzoate + H(+) = a 2-methoxy-6-(all-trans-polyprenyl)phenol + CO2. Its pathway is cofactor biosynthesis; ubiquinone biosynthesis. Functionally, lyase that catalyzes the C1-decarboxylation of 4-hydroxy-3-methoxy-5-(all-trans-polyprenyl)benzoic acid into 2-methoxy-6-(all-trans-polyprenyl)phenol during ubiquinone biosynthesis. The protein is Ubiquinone biosynthesis protein COQ4, mitochondrial of Podospora anserina (strain S / ATCC MYA-4624 / DSM 980 / FGSC 10383) (Pleurage anserina).